A 303-amino-acid chain; its full sequence is Vesicle-trafficking protein SEC22c (303 aa).

The Cytoplasmic segment spans residues Met1–Pro183. The Longin domain maps to Ser8–Ile119. The helical transmembrane segment at Val184–Ile204 threads the bilayer. Residues Arg205–Asn223 are Lumenal-facing. Residues Ile224 to Tyr244 form a helical membrane-spanning segment. The Cytoplasmic segment spans residues Ser245 to Arg248. A helical transmembrane segment spans residues Thr249–Leu269. A topological domain (lumenal) is located at residue Arg270. The helical transmembrane segment at Asn271 to Thr291 threads the bilayer. Over Arg292–Val303 the chain is Cytoplasmic.

It belongs to the synaptobrevin family.

It localises to the endoplasmic reticulum membrane. May be involved in vesicle transport between the ER and the Golgi complex. This is Vesicle-trafficking protein SEC22c (Sec22c) from Mus musculus (Mouse).